Reading from the N-terminus, the 383-residue chain is Outer membrane protein assembly factor BamB (383 aa).

A signal peptide spans 1–23 (MMLLKRCNRRALVALAAVLLLAA). Residue C24 is the site of N-palmitoyl cysteine attachment. C24 carries the S-diacylglycerol cysteine lipid modification.

This sequence belongs to the BamB family. Part of the Bam complex.

The protein localises to the cell outer membrane. Part of the outer membrane protein assembly complex, which is involved in assembly and insertion of beta-barrel proteins into the outer membrane. This Alkalilimnicola ehrlichii (strain ATCC BAA-1101 / DSM 17681 / MLHE-1) protein is Outer membrane protein assembly factor BamB.